The sequence spans 334 residues: GTP 3',8-cyclase (334 aa).

Residues 13–239 (RFQRKFYYLR…KARADNDGPA (227 aa)) form the Radical SAM core domain. Arg22 is a binding site for GTP. [4Fe-4S] cluster is bound by residues Cys29 and Cys33. Tyr35 provides a ligand contact to S-adenosyl-L-methionine. [4Fe-4S] cluster is bound at residue Cys36. Arg73 is a binding site for GTP. Gly77 contributes to the S-adenosyl-L-methionine binding site. Position 104 (Thr104) interacts with GTP. Ser128 is a binding site for S-adenosyl-L-methionine. Lys165 is a binding site for GTP. An S-adenosyl-L-methionine-binding site is contributed by Met199. [4Fe-4S] cluster is bound by residues Cys262 and Cys265. Residue 267-269 (RLR) participates in GTP binding. Position 279 (Cys279) interacts with [4Fe-4S] cluster.

The protein belongs to the radical SAM superfamily. MoaA family. Monomer and homodimer. [4Fe-4S] cluster serves as cofactor.

The catalysed reaction is GTP + AH2 + S-adenosyl-L-methionine = (8S)-3',8-cyclo-7,8-dihydroguanosine 5'-triphosphate + 5'-deoxyadenosine + L-methionine + A + H(+). It participates in cofactor biosynthesis; molybdopterin biosynthesis. In terms of biological role, catalyzes the cyclization of GTP to (8S)-3',8-cyclo-7,8-dihydroguanosine 5'-triphosphate. The chain is GTP 3',8-cyclase from Vibrio cholerae serotype O1 (strain M66-2).